Here is a 382-residue protein sequence, read N- to C-terminus: MKLHEHQSKELLKKYGLPVPEGYAAFNVKEAKEAAQALGGYPLVVKAQIHCGARGKAGGVKIVKSDEELEAFSEAILGKILKTVQCPNGKVVSRLLIEKATPIEKEFYLSITLDRSNSKILIMASKEGGMEIEELSKEKPDAIIKEYVDPVLGIMPYQTRKLSFALGLNPSLFGKIVSKLYQAYMDLDASLLEINPLVLTKDGDIVLLDAKVEIDDNAAFRHKDIEELEDITQIDPLEVEAKKYGLNYIKLEGNIGCMVNGAGLAMTTMDIIKLAGGAPANFLDVGGGASVEQIANAFRILTSDENVKAVFINIFGGILRCDRLANGLIEAAKIVNIKIPVVVRLEGTNVEEGRKLLKESGLNFESAVDMWDGAQKAIKLAQ.

An ATP-grasp domain is found at 9-240 (KELLKKYGLP…ITQIDPLEVE (232 aa)). ATP is bound by residues Lys-46, Glu-98, Thr-101, and Glu-106. The Mg(2+) site is built by Asn-195 and Asp-209. Residues Asn-260 and 317 to 319 (GIL) contribute to the substrate site.

Belongs to the succinate/malate CoA ligase beta subunit family. As to quaternary structure, heterotetramer of two alpha and two beta subunits. It depends on Mg(2+) as a cofactor.

It carries out the reaction succinate + ATP + CoA = succinyl-CoA + ADP + phosphate. The catalysed reaction is GTP + succinate + CoA = succinyl-CoA + GDP + phosphate. It functions in the pathway carbohydrate metabolism; tricarboxylic acid cycle; succinate from succinyl-CoA (ligase route): step 1/1. Succinyl-CoA synthetase functions in the citric acid cycle (TCA), coupling the hydrolysis of succinyl-CoA to the synthesis of either ATP or GTP and thus represents the only step of substrate-level phosphorylation in the TCA. The beta subunit provides nucleotide specificity of the enzyme and binds the substrate succinate, while the binding sites for coenzyme A and phosphate are found in the alpha subunit. This chain is Succinate--CoA ligase [ADP-forming] subunit beta, found in Hydrogenobaculum sp. (strain Y04AAS1).